A 190-amino-acid polypeptide reads, in one-letter code: MSTKILKAGGTEADSFETSISQALVELETNSDLKAQLRELYITKAKEIELHNKKSIIIYVPMPKLKAFQKIQIRLVRELEKKFSGKHVVFIGDRKILPKPSHKTRVANKQKRPRSRTLTSVYDAILEDLVFPAEIVGKRIRVKLDGSQLIKVHLDKNQQTTIEHKVDTFQSVYKKLTGREVTFEFPEPYL.

The protein belongs to the eukaryotic ribosomal protein eS7 family.

This Manduca sexta (Tobacco hawkmoth) protein is Small ribosomal subunit protein eS7 (RpS7).